Here is a 68-residue protein sequence, read N- to C-terminus: Large ribosomal subunit protein uL29 (68 aa).

It belongs to the universal ribosomal protein uL29 family.

This is Large ribosomal subunit protein uL29 from Chlorobaculum tepidum (strain ATCC 49652 / DSM 12025 / NBRC 103806 / TLS) (Chlorobium tepidum).